A 41-amino-acid polypeptide reads, in one-letter code: U15-myrmicitoxin-Tb1b (41 aa).

An N-terminal signal peptide occupies residues 1 to 25 (MKIVKLITIFAMIATLMVTVTNGEA). His40 is subject to Histidine amide.

As to expression, expressed by the venom gland.

It localises to the secreted. In terms of biological role, venom protein with unknown function. Does not induce paralysis when a high dose is administered by intrathoracic injection into the blowfly Lucilia caesar. The chain is U15-myrmicitoxin-Tb1b from Tetramorium bicarinatum (Tramp ant).